A 291-amino-acid polypeptide reads, in one-letter code: Small ribosomal subunit protein uS2 (291 aa).

The protein belongs to the universal ribosomal protein uS2 family.

This is Small ribosomal subunit protein uS2 from Lawsonia intracellularis (strain PHE/MN1-00).